A 133-amino-acid chain; its full sequence is ATP synthase epsilon chain (133 aa).

It belongs to the ATPase epsilon chain family. In terms of assembly, F-type ATPases have 2 components, CF(1) - the catalytic core - and CF(0) - the membrane proton channel. CF(1) has five subunits: alpha(3), beta(3), gamma(1), delta(1), epsilon(1). CF(0) has three main subunits: a, b and c.

The protein localises to the cell membrane. Functionally, produces ATP from ADP in the presence of a proton gradient across the membrane. The chain is ATP synthase epsilon chain from Lawsonia intracellularis (strain PHE/MN1-00).